Reading from the N-terminus, the 355-residue chain is Uroporphyrinogen decarboxylase (355 aa).

Residues 27-31, Asp78, Tyr155, Ser210, and His328 each bind substrate; that span reads RQAGR.

Belongs to the uroporphyrinogen decarboxylase family. In terms of assembly, homodimer.

It localises to the cytoplasm. The catalysed reaction is uroporphyrinogen III + 4 H(+) = coproporphyrinogen III + 4 CO2. The protein operates within porphyrin-containing compound metabolism; protoporphyrin-IX biosynthesis; coproporphyrinogen-III from 5-aminolevulinate: step 4/4. Catalyzes the decarboxylation of four acetate groups of uroporphyrinogen-III to yield coproporphyrinogen-III. In Pseudomonas aeruginosa (strain UCBPP-PA14), this protein is Uroporphyrinogen decarboxylase.